A 400-amino-acid chain; its full sequence is Argininosuccinate synthase (400 aa).

Alanine 8–serine 16 provides a ligand contact to ATP. Residue tyrosine 87 participates in L-citrulline binding. Residue glycine 117 coordinates ATP. Residues threonine 119, asparagine 123, and aspartate 124 each coordinate L-aspartate. L-citrulline is bound at residue asparagine 123. 4 residues coordinate L-citrulline: arginine 127, serine 175, glutamate 260, and tyrosine 272.

Belongs to the argininosuccinate synthase family. Type 1 subfamily. As to quaternary structure, homotetramer.

It localises to the cytoplasm. It carries out the reaction L-citrulline + L-aspartate + ATP = 2-(N(omega)-L-arginino)succinate + AMP + diphosphate + H(+). It participates in amino-acid biosynthesis; L-arginine biosynthesis; L-arginine from L-ornithine and carbamoyl phosphate: step 2/3. In Nocardia farcinica (strain IFM 10152), this protein is Argininosuccinate synthase.